The chain runs to 462 residues: ATP-dependent protease ATPase subunit HslU (462 aa).

Residues isoleucine 21, 63-68, aspartate 275, glutamate 340, and arginine 412 each bind ATP; that span reads GVGKTE.

It belongs to the ClpX chaperone family. HslU subfamily. As to quaternary structure, a double ring-shaped homohexamer of HslV is capped on each side by a ring-shaped HslU homohexamer. The assembly of the HslU/HslV complex is dependent on binding of ATP.

Its subcellular location is the cytoplasm. ATPase subunit of a proteasome-like degradation complex; this subunit has chaperone activity. The binding of ATP and its subsequent hydrolysis by HslU are essential for unfolding of protein substrates subsequently hydrolyzed by HslV. HslU recognizes the N-terminal part of its protein substrates and unfolds these before they are guided to HslV for hydrolysis. This is ATP-dependent protease ATPase subunit HslU from Pseudothermotoga lettingae (strain ATCC BAA-301 / DSM 14385 / NBRC 107922 / TMO) (Thermotoga lettingae).